Reading from the N-terminus, the 460-residue chain is tRNA modification GTPase MnmE (460 aa).

(6S)-5-formyl-5,6,7,8-tetrahydrofolate contacts are provided by arginine 25, glutamate 87, and arginine 126. The TrmE-type G domain occupies 221 to 381 (GLKVAIVGRP…LETAIANLVQ (161 aa)). Asparagine 231 serves as a coordination point for K(+). GTP contacts are provided by residues 231 to 236 (NVGKSS), 250 to 256 (TDLPGTT), and 275 to 278 (DTAG). Serine 235 lines the Mg(2+) pocket. K(+) contacts are provided by threonine 250, leucine 252, and threonine 255. Threonine 256 contacts Mg(2+). Lysine 460 contributes to the (6S)-5-formyl-5,6,7,8-tetrahydrofolate binding site.

Belongs to the TRAFAC class TrmE-Era-EngA-EngB-Septin-like GTPase superfamily. TrmE GTPase family. Homodimer. Heterotetramer of two MnmE and two MnmG subunits. K(+) is required as a cofactor.

Its subcellular location is the cytoplasm. Exhibits a very high intrinsic GTPase hydrolysis rate. Involved in the addition of a carboxymethylaminomethyl (cmnm) group at the wobble position (U34) of certain tRNAs, forming tRNA-cmnm(5)s(2)U34. The chain is tRNA modification GTPase MnmE from Picosynechococcus sp. (strain ATCC 27264 / PCC 7002 / PR-6) (Agmenellum quadruplicatum).